We begin with the raw amino-acid sequence, 467 residues long: Nuclear distribution protein nudF 1 (467 aa).

The 33-residue stretch at 9–41 folds into the LisH domain; that stretch reads QAEELHKSIIAYLASVNLSESATTLRAELGDAV. Residues 60–87 adopt a coiled-coil conformation; the sequence is TSVVRLQKKIMDLESRCAALQSELDSAT. WD repeat units follow at residues 113–154, 156–196, 200–247, 250–289, 292–352, 354–393, 398–428, and 429–466; these read SHRS…RTVK, HTKA…KNIR, GHDH…CVKT, GHVDWVRAVAPSIDGRFLFAAGDDRIPRLWDLSAAETRST, GHEH…IKTL, GHDNWVRALAFHPGGKYLLSVSDDKTIRCWDLTQECKCVR, THEHFVTCLRWAPPLIKDSGANGDAGANGTP, and AATTTSNGARQDPNAANKISIRCVIATGSVDQKVRVFA. Positions 417–437 are enriched in low complexity; it reads GANGDAGANGTPAATTTSNGA. Positions 417 to 441 are disordered; the sequence is GANGDAGANGTPAATTTSNGARQDP.

It belongs to the WD repeat LIS1/nudF family. In terms of assembly, self-associates. Interacts with nudE and dynein.

The protein localises to the cytoplasm. It is found in the cytoskeleton. Its subcellular location is the spindle pole. Its function is as follows. Positively regulates the activity of the minus-end directed microtubule motor protein dynein. May enhance dynein-mediated microtubule sliding by targeting dynein to the microtubule plus end. Required for nuclear migration during vegetative growth as well as development. Required for retrograde early endosome (EE) transport from the hyphal tip. Required for localization of dynein to the mitotic spindle poles. Recruits additional proteins to the dynein complex at SPBs. The polypeptide is Nuclear distribution protein nudF 1 (Aspergillus clavatus (strain ATCC 1007 / CBS 513.65 / DSM 816 / NCTC 3887 / NRRL 1 / QM 1276 / 107)).